The primary structure comprises 517 residues: Benzoate 4-monooxygenase bphA (517 aa).

Residues 4-24 (LLLSPYGAYLGLALLVLYYLL) traverse the membrane as a helical segment. N282 and N325 each carry an N-linked (GlcNAc...) asparagine glycan. C461 is a heme binding site.

It belongs to the cytochrome P450 family. Heme serves as cofactor.

Its subcellular location is the membrane. The enzyme catalyses benzoate + reduced [NADPH--hemoprotein reductase] + O2 = 4-hydroxybenzoate + oxidized [NADPH--hemoprotein reductase] + H2O + H(+). Functionally, cytochrome P450 monooxygenase; part of the benzoic acid degradation pathway also known as the protocatechuic acid pathway. Benzoic acid debradation begins with the conversion of benzoic acid into 4-hydroxybenzoic acid through hydroxylation by the benzoate-4-monooxygenase bphA, and its partner NADPH-cytochrome P450 reductase cprA which act as a mediator in electron donation from NADPH. 4-Hydroxybenzoic acid is then converted into 3,4-dihydroxybenzoic acid (also called protocatechuic acid) by the p-hydroxybenzoate-m-hydroxylase phhA. Protocatechuic acid is converted into 3-carboxy-cis,cis-muconic acid by the intradiol ring-cleavage dioxygenase prcA, which is further metabolized through the 3-oxoadipate pathway to finally enter the tricarboxylic acid cycle (TCA). This Aspergillus niger (strain ATCC MYA-4892 / CBS 513.88 / FGSC A1513) protein is Benzoate 4-monooxygenase bphA.